The following is an 823-amino-acid chain: MGCAPSIHTSENRTFSHSDGEDEDVDVDVPGPAPRSIQRWSTAPGLVEPQPRDNGASKVSVADVQFGPMRFHQDQLQVLLVFTKEDSQCNGFHRACEKAGFKCTVTKEVQTVLTCFQDKLHDIIIIDHRYPRQMDAETLCRSIRSSKFSENTVIVGVVRRVDKEESSLMPFLAAGFTRRFIENPNVMACYNELLQLACGEVRSQLKLRACNSVFTALEKSQEAIEITSEDHIIQYANPAFESTMGYQSGELIGKELAQVPINEKKGDLLDAINSCVTVDKEWQGVYHTQKKNGDNIQQNVKIIPVIGQGGKIRHYVSIIRVCNGNNKVETTTECVQTDSQTDNQAGKHKDRRKHSMDAKAVSSRTSDVSSQRRHSSLARIHSMMIEAPITKVINIINAAQENSPVPVTEALNRVLDILRTTELYSPQFNAQDDPHATDLVGGLMSDGLRRFSGNEYILATKNLPPLSNNLATPVSLHDVPPRIALAIENEEQWDFDIFELEVATQNRPLIYLGLKTFARFGMCEFLQCSETTLRSWFQMIESNYHSSNPYHNSTHAADVLHATAYFLSRDKIKETLDRIDEVAALIAATVHDVDHPGRTNSFLCNAGNQLAVLYNDTAVLESHHVALAFQLTLENDQCNIFKQMERNDYRTLRQSIIDMVLATEMTKHFEHVNKFINSINKPLTAQESEEPDRSLEDIKAMLKTPESRALIKRMMIKCADVSNPCRPLEHCIEWAARISEEYFSQTDEEKQLDLPVVMPVFDRNTCSIPKSQISFIDYFITDMFDAWDAFVDLPNLMQHLDDNFRYWKGLDEKKLRSLRPPPE.

Residues 1-55 are disordered; sequence MGCAPSIHTSENRTFSHSDGEDEDVDVDVPGPAPRSIQRWSTAPGLVEPQPRDNG. Residues 10–19 are compositionally biased toward basic and acidic residues; sequence SENRTFSHSD. The 72-residue stretch at 209-280 folds into the PAS domain; the sequence is ACNSVFTALE…AINSCVTVDK (72 aa). The region spanning 283 to 325 is the PAC domain; the sequence is QGVYHTQKKNGDNIQQNVKIIPVIGQGGKIRHYVSIIRVCNGN. Residues 338–373 form a disordered region; sequence DSQTDNQAGKHKDRRKHSMDAKAVSSRTSDVSSQRR. S355 bears the Phosphoserine; by PKA mark. Phosphoserine occurs at positions 382 and 452. Y456 carries the phosphotyrosine modification. The 340-residue stretch at 475 to 814 folds into the PDEase domain; the sequence is SLHDVPPRIA…RYWKGLDEKK (340 aa). H551 (proton donor) is an active-site residue. The a divalent metal cation site is built by H555, H591, D592, and D720.

Belongs to the cyclic nucleotide phosphodiesterase family. PDE8 subfamily. In terms of assembly, interacts with RAF1. The interaction promotes RAF1 activity. The cofactor is a divalent metal cation. Phosphorylated at Ser-355 by PKA under elevated cAMP conditions, this enhances catalytic activity. As to expression, expressed in multiple tissues, with highest levels in testis, followed by liver, heart, skeletal muscle, and kidney. In the testis, expressed specifically in the seminiferous tubules, in postmitotic pachytene spermatocytes. Low expression, if any, in lung, smooth muscle, pancreas, thyroid, thymus, submaxillary gland, spleen, prostate, epididymus, uterus.

It carries out the reaction 3',5'-cyclic AMP + H2O = AMP + H(+). The protein operates within purine metabolism; 3',5'-cyclic AMP degradation; AMP from 3',5'-cyclic AMP: step 1/1. Its activity is regulated as follows. Inhibited by dipyridimole. Insensitive to selective PDE inhibitor rolipram and to the non-selective inhibitor, IBMX. Its function is as follows. Hydrolyzes the second messenger cAMP, which is a key regulator of many important physiological processes. May be involved in maintaining basal levels of the cyclic nucleotide and/or in the cAMP regulation of germ cell development. Binding to RAF1 reduces RAF1 'Ser-259' inhibitory-phosphorylation and stimulates RAF1-dependent EGF-activated ERK-signaling. Protects against cell death induced by hydrogen peroxide and staurosporine. The polypeptide is High affinity cAMP-specific and IBMX-insensitive 3',5'-cyclic phosphodiesterase 8A (Pde8a) (Mus musculus (Mouse)).